The primary structure comprises 146 residues: Linear conopeptide (146 aa).

A signal peptide spans Met-1 to Pro-19. The propeptide occupies Gln-20–Ser-34. Met-40 carries the methionine sulfoxide; partial; in Cn2 modification. Propeptides lie at residues Phe-58 to Arg-80 and Phe-104 to Gln-146. The disordered stretch occupies residues Asn-107–Gln-146. Residues Lys-135 to Gln-146 show a composition bias toward basic and acidic residues.

In terms of tissue distribution, expressed by the venom duct.

It is found in the secreted. This Conus consors (Singed cone) protein is Linear conopeptide.